A 241-amino-acid chain; its full sequence is Chaperone protein HifB (241 aa).

The first 27 residues, M1 to N27, serve as a signal peptide directing secretion.

The protein belongs to the periplasmic pilus chaperone family.

Its subcellular location is the periplasm. In terms of biological role, mediates assembly of pili by forming soluble multimeric complexes with pili subunits as an intermediate step in the assembly process. This protein is involved in type B pili (HifA) assembly. The protein is Chaperone protein HifB (hifB) of Haemophilus influenzae.